The primary structure comprises 133 residues: Transcriptional regulator MraZ (133 aa).

SpoVT-AbrB domains are found at residues 5–47 (TYEH…SKDD) and 76–119 (TVEI…SKNK).

The protein belongs to the MraZ family. Forms oligomers.

It is found in the cytoplasm. The protein localises to the nucleoid. This Mycoplasma mycoides subsp. mycoides SC (strain CCUG 32753 / NCTC 10114 / PG1) protein is Transcriptional regulator MraZ.